The sequence spans 38 residues: uncharacterized protein (38 aa).

This is an uncharacterized protein from Haemophilus influenzae (strain ATCC 51907 / DSM 11121 / KW20 / Rd).